The sequence spans 163 residues: Regulator of chromosome segregation (163 aa).

Interacts with CpsD and ParB.

It is found in the cytoplasm. Its subcellular location is the nucleoid. The protein localises to the cell membrane. Functionally, required for cell division and chromosome segregation. Binds to DNA and is involved in segregating the origin of replication (oriC) region to new daughter cells. When the nucleoid is not properly segregated, involved in blocking the cell division to protect the nucleoid against premature truncation by the newly forming septum, a function which is dependent on CpsD and its autophosphorylation level. This Streptococcus pneumoniae serotype 2 (strain D39 / NCTC 7466) protein is Regulator of chromosome segregation.